We begin with the raw amino-acid sequence, 294 residues long: 33 kDa chaperonin (294 aa).

Disulfide bonds link C238/C240 and C271/C274.

It belongs to the HSP33 family. Post-translationally, under oxidizing conditions two disulfide bonds are formed involving the reactive cysteines. Under reducing conditions zinc is bound to the reactive cysteines and the protein is inactive.

It localises to the cytoplasm. Functionally, redox regulated molecular chaperone. Protects both thermally unfolding and oxidatively damaged proteins from irreversible aggregation. Plays an important role in the bacterial defense system toward oxidative stress. In Staphylococcus carnosus (strain TM300), this protein is 33 kDa chaperonin.